The sequence spans 209 residues: Glutathione S-transferase 1, isoform C (209 aa).

A GST N-terminal domain is found at 1–80; it reads MDFYYLPGSA…YLAEKYGKDD (80 aa). Residues S9, 50–52, and 64–66 each bind glutathione; these read HCI and ESR. One can recognise a GST C-terminal domain in the interval 86–207; sequence DPQKRAVVNQ…AGIEEFKKYF (122 aa).

Belongs to the GST superfamily. Theta family. In terms of assembly, homodimer.

The enzyme catalyses RX + glutathione = an S-substituted glutathione + a halide anion + H(+). It catalyses the reaction 1,1,1-trichloro-2,2-bis(4-chlorophenyl)ethane = 1,1-dichloro-2,2-bis(4-chlorophenyl)ethylene + chloride + H(+). In terms of biological role, conjugation of reduced glutathione to a wide number of exogenous and endogenous hydrophobic electrophiles. Has DDT dehydrochlorinase activity. In Anopheles gambiae (African malaria mosquito), this protein is Glutathione S-transferase 1, isoform C (GstD1).